A 320-amino-acid polypeptide reads, in one-letter code: MSFASETKKELTNLEVKPCCLKAELSALLRMNGLLSFSNQQILVDVQTENAAIARRIYTLLKKGYTVTVELLVRKKMRLKKNNVYIVRIIDGAHELLKDLKILKEDFSLIRVISPELVKKKCCKRSYLRGAFLAGGSVNNPETSSYHLEIFSLYEEHNNSLCELMNSHFFLNAKTLERKKGFITYLKEAEKISEFLNIIGAHQALLRFEDIRIVRDMRNSVNRLVNCETANLNKTIGAALRQVENIRYIDETIGLSALPDKLREIAELRMMYQDVTLKELGELVSGGKISKSGINHRLRKIDEIAERLRAGKPVDFHKSL.

Positions 276-310 form a DNA-binding region, H-T-H motif; it reads TLKELGELVSGGKISKSGINHRLRKIDEIAERLRA.

Belongs to the WhiA family.

In terms of biological role, involved in cell division and chromosome segregation. In Geobacillus sp. (strain WCH70), this protein is Probable cell division protein WhiA.